The sequence spans 120 residues: Large ribosomal subunit protein uL24 (120 aa).

The protein belongs to the universal ribosomal protein uL24 family. As to quaternary structure, part of the 50S ribosomal subunit.

One of two assembly initiator proteins, it binds directly to the 5'-end of the 23S rRNA, where it nucleates assembly of the 50S subunit. Functionally, one of the proteins that surrounds the polypeptide exit tunnel on the outside of the subunit. This Pseudarthrobacter chlorophenolicus (strain ATCC 700700 / DSM 12829 / CIP 107037 / JCM 12360 / KCTC 9906 / NCIMB 13794 / A6) (Arthrobacter chlorophenolicus) protein is Large ribosomal subunit protein uL24.